Consider the following 374-residue polypeptide: Methylthioribose-1-phosphate isomerase (374 aa).

The Proton donor role is filled by aspartate 256.

Belongs to the eIF-2B alpha/beta/delta subunits family. MtnA subfamily.

It localises to the cytoplasm. The protein localises to the nucleus. It catalyses the reaction 5-(methylsulfanyl)-alpha-D-ribose 1-phosphate = 5-(methylsulfanyl)-D-ribulose 1-phosphate. It functions in the pathway amino-acid biosynthesis; L-methionine biosynthesis via salvage pathway; L-methionine from S-methyl-5-thio-alpha-D-ribose 1-phosphate: step 1/6. In terms of biological role, catalyzes the interconversion of methylthioribose-1-phosphate (MTR-1-P) into methylthioribulose-1-phosphate (MTRu-1-P). The polypeptide is Methylthioribose-1-phosphate isomerase (Leishmania braziliensis).